Reading from the N-terminus, the 481-residue chain is Arf-GAP domain and FG repeat-containing protein 2 (481 aa).

The region spanning 27–153 is the Arf-GAP domain; the sequence is EVWCRRVREL…WYVPPDQVKG (127 aa). The segment at 47–70 adopts a C4-type zinc-finger fold; the sequence is CFECAQRGVTYVDITVGSFVCTTC. Disordered stretches follow at residues 150 to 220, 271 to 309, and 431 to 481; these read QVKG…SVKK, SSVF…APAS, and QQNG…NPFL. The span at 157–166 shows a compositional bias: polar residues; it reads TKGSASTPVQ. Lysine 173 is modified (N6-acetyllysine). 3 stretches are compositionally biased toward polar residues: residues 188-210, 283-298, and 454-481; these read VAAS…ARST, ASFQ…SQGT, and AGIS…NPFL.

As to quaternary structure, interacts with EPS15R.

The chain is Arf-GAP domain and FG repeat-containing protein 2 (AGFG2) from Homo sapiens (Human).